Reading from the N-terminus, the 107-residue chain is U1-lycotoxin-Ls1i (107 aa).

The N-terminal stretch at 1–20 (MMKVLVVVALLVTLISYSSS) is a signal peptide. Positions 21–41 (EGIDDLEADELLSLMANEQTR) are excised as a propeptide. Intrachain disulfides connect Cys-44-Cys-59, Cys-51-Cys-68, Cys-58-Cys-86, and Cys-70-Cys-84.

Belongs to the neurotoxin 19 (CSTX) family. 04 (U1-Lctx) subfamily. In terms of tissue distribution, expressed by the venom gland.

It localises to the secreted. The chain is U1-lycotoxin-Ls1i from Lycosa singoriensis (Wolf spider).